Consider the following 544-residue polypeptide: Lysophosphatidylcholine acyltransferase 2 (544 aa).

Topologically, residues 1–58 (MNRCAEAAAVAATVPGSGVGDSGLRPPMVPRQASFFPPPVPNPFVQQTRISAARRLQM) are cytoplasmic. The chain crosses the membrane as a helical; Signal-anchor for type II membrane protein span at residues 59–79 (ILLGIILLPVRALLVGLVLLL). Residues 80-544 (AWPFAVISTV…EEGTSGKKVD (465 aa)) are Lumenal-facing. Positions 146–151 (HSTFFD) match the HXXXXD motif motif. Residues 220 to 223 (EGTC) carry the EGTC motif motif. 2 EF-hand domains span residues 391 to 426 (PVSD…LCNP) and 428 to 463 (NTED…SLGV). Ca(2+) contacts are provided by Asp404, Asn406, Asp408, Ser410, Glu415, Asp441, Asp443, Asp445, Tyr447, and Glu452. Residues 520 to 530 (TAPSVASNKVS) show a composition bias toward polar residues. Residues 520–544 (TAPSVASNKVSPESHEEGTSGKKVD) are disordered. The segment covering 531-544 (PESHEEGTSGKKVD) has biased composition (basic and acidic residues).

This sequence belongs to the 1-acyl-sn-glycerol-3-phosphate acyltransferase family.

Its subcellular location is the endoplasmic reticulum membrane. The protein localises to the golgi apparatus membrane. It localises to the cell membrane. It is found in the lipid droplet. It catalyses the reaction a 1-acyl-sn-glycero-3-phosphocholine + an acyl-CoA = a 1,2-diacyl-sn-glycero-3-phosphocholine + CoA. The enzyme catalyses a 1-O-alkyl-sn-glycero-3-phosphocholine + acetyl-CoA = a 1-O-alkyl-2-acetyl-sn-glycero-3-phosphocholine + CoA. It carries out the reaction a 1-acyl-sn-glycero-3-phosphate + an acyl-CoA = a 1,2-diacyl-sn-glycero-3-phosphate + CoA. The catalysed reaction is a 1-O-(1Z-alkenyl)-sn-glycero-3-phosphocholine + an acyl-CoA = a 1-O-(1Z-alkenyl)-2-acyl-sn-glycero-3-phosphocholine + CoA. It catalyses the reaction 1-hexadecanoyl-sn-glycero-3-phosphate + (9Z)-octadecenoyl-CoA = 1-hexadecanoyl-2-(9Z-octadecenoyl)-sn-glycero-3-phosphate + CoA. The enzyme catalyses 1-(9Z-octadecenoyl)-sn-glycero-3-phosphate + (9Z)-octadecenoyl-CoA = 1,2-di-(9Z-octadecenoyl)-sn-glycero-3-phosphate + CoA. It carries out the reaction 1-(9Z-octadecenoyl)-sn-glycero-3-phosphate + hexadecanoyl-CoA = 1-(9Z)-octadecenoyl-2-hexadecanoyl-sn-glycero-3-phosphate + CoA. The catalysed reaction is 1-heptadecanoyl-sn-glycero-3-phosphate + (9Z)-octadecenoyl-CoA = 1-heptadecanoyl-2-(9Z)-octadecenoyl-sn-glycero-3-phosphate + CoA. It catalyses the reaction 1-octadecanoyl-sn-glycero-3-phosphate + (9Z)-octadecenoyl-CoA = 1-octadecanoyl-2-(9Z-octadecenoyl)-sn-glycero-3-phosphate + CoA. The enzyme catalyses heptadecanoyl-CoA + 1-(9Z-octadecenoyl)-sn-glycero-3-phosphate = 1-(9Z)-octadecenoyl-2-heptadecanoyl-sn-glycero-3-phosphate + CoA. It carries out the reaction 1-(9Z-octadecenoyl)-sn-glycero-3-phosphate + (9Z,12Z)-octadecadienoyl-CoA = 1-(9Z)-octadecenoyl-2-(9Z,12Z)-octadecadienoyl-sn-glycero-3-phosphate + CoA. The catalysed reaction is 1-(9Z-octadecenoyl)-sn-glycero-3-phosphate + tetradecanoyl-CoA = 1-(9Z)-octadecenoyl-2-tetradecanoyl-sn-glycero-3-phosphate + CoA. It catalyses the reaction pentadecanoyl-CoA + 1-(9Z-octadecenoyl)-sn-glycero-3-phosphate = 1-(9Z)-octadecenoyl-2-pentadecanoyl-sn-glycero-3-phosphate + CoA. The enzyme catalyses nonadecanoyl-CoA + 1-(9Z-octadecenoyl)-sn-glycero-3-phosphate = 1-(9Z)-octadecenoyl-2-nonadecanoyl-sn-glycero-3-phosphate + CoA. It carries out the reaction 1-hexadecanoyl-sn-glycero-3-phosphocholine + (9Z)-octadecenoyl-CoA = 1-hexadecanoyl-2-(9Z-octadecenoyl)-sn-glycero-3-phosphocholine + CoA. The catalysed reaction is 1-O-hexadecyl-sn-glycero-3-phosphocholine + acetyl-CoA = 1-O-hexadecyl-2-acetyl-sn-glycero-3-phosphocholine + CoA. It catalyses the reaction 1-O-octadecyl-sn-glycero-3-phosphocholine + acetyl-CoA = 1-O-octadecyl-2-acetyl-sn-glycero-3-phosphocholine + CoA. The enzyme catalyses 1-hexadecanoyl-sn-glycero-3-phosphocholine + acetyl-CoA = 1-hexadecanoyl-2-acetyl-sn-glycero-3-phosphocholine + CoA. It carries out the reaction 1-octadecanoyl-sn-glycero-3-phosphocholine + acetyl-CoA = 1-octadecanoyl-2-acetyl-sn-glycero-3-phosphocholine + CoA. The catalysed reaction is a 1-O-(1Z-alkenyl)-sn-glycero-3-phosphocholine + acetyl-CoA = 1-O-(1Z)-alkenyl-2-acetyl-sn-glycero-3-phosphocholine + CoA. It catalyses the reaction 1-O-octadecyl-sn-glycero-3-phosphocholine + (5Z,8Z,11Z,14Z)-eicosatetraenoyl-CoA = 1-O-octadecyl-2-(5Z,8Z,11Z,14Z)-eicosatetraenoyl-sn-glycero-3-phosphocholine + CoA. It participates in lipid metabolism; phospholipid metabolism. In terms of biological role, exhibits both acyltransferase and acetyltransferase activities. Activity is calcium-dependent. Catalyzes the conversion of lysophosphatidylcholine (1-acyl-sn-glycero-3-phosphocholine or LPC) into phosphatidylcholine (1,2-diacyl-sn-glycero-3-phosphocholine or PC). Catalyzes the conversion 1-acyl-sn-glycerol-3-phosphate (lysophosphatidic acid or LPA) into 1,2-diacyl-sn-glycerol-3-phosphate (phosphatidic acid or PA) by incorporating an acyl moiety at the sn-2 position of the glycerol backbone. Involved in platelet-activating factor (PAF) biosynthesis by catalyzing the conversion of the PAF precursor, 1-O-alkyl-sn-glycero-3-phosphocholine (lyso-PAF) into 1-O-alkyl-2-acetyl-sn-glycero-3-phosphocholine (PAF). Also converts lyso-PAF to 1-O-alkyl-2-acyl-sn-glycero-3-phosphocholine (PC), a major component of cell membranes and a PAF precursor. Under resting conditions, acyltransferase activity is preferred. Upon acute inflammatory stimulus, acetyltransferase activity is enhanced and PAF synthesis increases. Involved in the regulation of lipid droplet number and size. The protein is Lysophosphatidylcholine acyltransferase 2 (Lpcat2) of Rattus norvegicus (Rat).